Consider the following 299-residue polypeptide: Riboflavin transporter ImpX (299 aa).

EamA domains are found at residues 6 to 144 and 162 to 294; these read KGAL…YLLT and SLYS…SIIK. Transmembrane regions (helical) follow at residues 7–27, 34–54, 68–88, 101–121, 129–149, 158–178, 202–222, 224–244, 253–273, and 276–296; these read GALL…ALTP, VPFV…ILFG, DLFF…LCIV, VVTL…RLLL, YLFW…EFHL, LLPA…ATVF, IMFV…ATAG, WLIF…LYYF, VATM…YLIN, and VLSP…IKIS.

It belongs to the EamA transporter family.

The protein resides in the cell membrane. Its function is as follows. Transports riboflavin into the cell. This Fusobacterium nucleatum subsp. nucleatum (strain ATCC 23726 / VPI 4351) protein is Riboflavin transporter ImpX.